Reading from the N-terminus, the 117-residue chain is MSNIIKAIEDAQLKQDLPKFSPGDTVIVQVKVKEGERERLQAFEGVVIAIRNRGLHSAFTVRKISNGEGVERTFQTHSPIVNSIEVKRRGAVRRAKLYYLRERSGKSARIKEKLAKK.

The protein belongs to the bacterial ribosomal protein bL19 family.

Functionally, this protein is located at the 30S-50S ribosomal subunit interface and may play a role in the structure and function of the aminoacyl-tRNA binding site. This Aliivibrio salmonicida (strain LFI1238) (Vibrio salmonicida (strain LFI1238)) protein is Large ribosomal subunit protein bL19.